Here is an 803-residue protein sequence, read N- to C-terminus: Zinc finger and BTB domain-containing protein 17 (803 aa).

Positions 1 to 104 constitute a BTB domain; that stretch reads MDFPQHSQHV…VATFLQMQDI (104 aa). The tract at residues 116–295 is disordered; sequence EPATSPGGNA…GLRSGTYGDR (180 aa). Residue serine 120 is modified to Phosphoserine. The segment covering 132-142 has biased composition (basic and acidic residues); it reads GGDKRAKEEKV. Low complexity-rich tracts occupy residues 171–180 and 206–217; these read GQAQSAASGA and AAAEAEAALSES. Composition is skewed to acidic residues over residues 233–244 and 261–272; these read EQKEQEEQEEEG and EAPEENENEESA. An interaction with MYC region spans residues 269-308; the sequence is EESAGTDSGQELGSEARGLRSGTYGDRTESKAYGSVIHKC. 13 consecutive C2H2-type zinc fingers follow at residues 306-328, 334-356, 362-384, 390-412, 418-440, 446-468, 474-496, 502-524, 530-552, 558-580, 586-608, 614-637, and 717-739; these read HKCE…IRIH, FSCR…EKTH, YGCE…KKRH, YRCE…QLVH, YQCD…LETH, HKCP…LKIH, LKCR…LRIH, YVCI…VRIH, CQCV…VRQH, YVCE…IRHH, HKCS…IIIH, YLCD…KTVH, and YACD…VRIH. Residue lysine 397 forms a Glycyl lysine isopeptide (Lys-Gly) (interchain with G-Cter in ubiquitin) linkage. Lysine 481 is covalently cross-linked (Glycyl lysine isopeptide (Lys-Gly) (interchain with G-Cter in ubiquitin)). Residues 637-718 form an interaction with MYC region; that stretch reads HQGKAGIKIL…EDPNTHILYA (82 aa). Residues 637-803 form an interaction with HCFC1 region; it reads HQGKAGIKIL…TAPECPPPAE (167 aa). Residues 779–803 form a disordered region; that stretch reads RDGAEGQPALAETSPTAPECPPPAE.

The protein belongs to the krueppel C2H2-type zinc-finger protein family. Homooligomerizes (via the BTB/POZ domain), multimerization is required for DNA binding. Interacts (via the C-terminal zinc fingers) with GIF1; the interaction results in the recruitment of MYB to the CDKN1A/p21 and CDKN1B promoters and repression of transcription. Interacts with TRAF2, interfering with the binding of UBC13 to TRAF2, and inhibiting TRAF2 E3 ligase activity. Interacts with MYC (via the C-terminal helix-loop-helix motif); the interaction inhibits ZBTB17 transactivation and growth arrest activities and renders it insoluble in the nucleus. Also interacts with HCFC1, MAGEA4 and TMPRSS11A. Interacts with BCL6; the interaction inhibits ZBTB17 transactivation activity on target genes involved in cell cycle arrest. Interacts with ZBTB49 isoform 3/ZNF509S1; this interaction blocks ZBTB17-mediated repression of RB1. In terms of processing, undergoes 'Lys-48'-linked polyubiquitination at Lys-397 and Lys-481 and subsequent proteasomal degradation in a TRAF2-dependent manner. As to expression, expressed in germinal center B-cells.

Its subcellular location is the nucleus. In terms of biological role, transcription factor that can function as an activator or repressor depending on its binding partners, and by targeting negative regulators of cell cycle progression. Plays a critical role in early lymphocyte development, where it is essential to prevent apoptosis in lymphoid precursors, allowing them to survive in response to IL7 and undergo proper lineage commitment. Has been shown to bind to the promoters of adenovirus major late protein and cyclin D1 and activate transcription. Required for early embryonic development during gastrulation. Represses RB1 transcription; this repression can be blocked by interaction with ZBTB49 isoform 3/ZNF509S1. The polypeptide is Zinc finger and BTB domain-containing protein 17 (ZBTB17) (Homo sapiens (Human)).